The following is a 216-amino-acid chain: DegV domain-containing protein UU190 (216 aa).

One can recognise a DegV domain in the interval 1 to 215 (MLWKNLDELF…LNNFAILIEA (215 aa)). A hexadecanoate-binding site is contributed by Ser-26.

Functionally, may bind long-chain fatty acids, such as palmitate, and may play a role in lipid transport or fatty acid metabolism. The polypeptide is DegV domain-containing protein UU190 (Ureaplasma parvum serovar 3 (strain ATCC 700970)).